The sequence spans 138 residues: MVEFLNFEVLEDHGWALQDEDLFAKAADANLQSTDFGRFYVDPNDTLLEAAEKNGFAWPFACRGGACTNCAVAVVDGEMPSPASHILPPELTEKGIRLSCIAAPVSDDAKIVYNLKHLPEVSELLLPASRFEQASSTD.

Positions 27-117 (ADANLQSTDF…DAKIVYNLKH (91 aa)) constitute a 2Fe-2S ferredoxin-type domain. Residues cysteine 62, cysteine 67, cysteine 70, and cysteine 100 each contribute to the [2Fe-2S] cluster site.

Belongs to the 2Fe2S plant-type ferredoxin family. It depends on [2Fe-2S] cluster as a cofactor.

Its function is as follows. Ferredoxins are iron-sulfur proteins that transfer electrons in a wide variety of metabolic reactions. This is Ferredoxin-2 (fer2) from Haloarcula marismortui (strain ATCC 43049 / DSM 3752 / JCM 8966 / VKM B-1809) (Halobacterium marismortui).